A 229-amino-acid chain; its full sequence is GTP cyclohydrolase 1 (229 aa).

Residues 1–21 (MDAKIKPLRAGKSADARTDFQ) form a disordered region. Residues C118, H121, and C189 each contribute to the Zn(2+) site.

The protein belongs to the GTP cyclohydrolase I family. In terms of assembly, toroid-shaped homodecamer, composed of two pentamers of five dimers.

The enzyme catalyses GTP + H2O = 7,8-dihydroneopterin 3'-triphosphate + formate + H(+). It functions in the pathway cofactor biosynthesis; 7,8-dihydroneopterin triphosphate biosynthesis; 7,8-dihydroneopterin triphosphate from GTP: step 1/1. This chain is GTP cyclohydrolase 1, found in Rhodopseudomonas palustris (strain HaA2).